The chain runs to 320 residues: Pantothenate kinase (320 aa).

Glycine 96 to serine 103 serves as a coordination point for ATP.

Belongs to the prokaryotic pantothenate kinase family.

The protein resides in the cytoplasm. It catalyses the reaction (R)-pantothenate + ATP = (R)-4'-phosphopantothenate + ADP + H(+). It participates in cofactor biosynthesis; coenzyme A biosynthesis; CoA from (R)-pantothenate: step 1/5. The polypeptide is Pantothenate kinase (Brevibacillus brevis (strain 47 / JCM 6285 / NBRC 100599)).